A 273-amino-acid chain; its full sequence is 2,3,4,5-tetrahydropyridine-2,6-dicarboxylate N-succinyltransferase (273 aa).

The substrate site is built by R104 and D141.

The protein belongs to the transferase hexapeptide repeat family. In terms of assembly, homotrimer.

The protein resides in the cytoplasm. It carries out the reaction (S)-2,3,4,5-tetrahydrodipicolinate + succinyl-CoA + H2O = (S)-2-succinylamino-6-oxoheptanedioate + CoA. Its pathway is amino-acid biosynthesis; L-lysine biosynthesis via DAP pathway; LL-2,6-diaminopimelate from (S)-tetrahydrodipicolinate (succinylase route): step 1/3. The sequence is that of 2,3,4,5-tetrahydropyridine-2,6-dicarboxylate N-succinyltransferase from Aromatoleum aromaticum (strain DSM 19018 / LMG 30748 / EbN1) (Azoarcus sp. (strain EbN1)).